A 451-amino-acid polypeptide reads, in one-letter code: Tubulin alpha chain (451 aa).

Residue Q11 coordinates GTP. Residue K40 is modified to N6-acetyllysine. GTP is bound by residues E71, G144, T145, T179, N206, and N228. E71 contacts Mg(2+). The active site involves E254.

This sequence belongs to the tubulin family. As to quaternary structure, dimer of alpha and beta chains. A typical microtubule is a hollow water-filled tube with an outer diameter of 25 nm and an inner diameter of 15 nM. Alpha-beta heterodimers associate head-to-tail to form protofilaments running lengthwise along the microtubule wall with the beta-tubulin subunit facing the microtubule plus end conferring a structural polarity. Microtubules usually have 13 protofilaments but different protofilament numbers can be found in some organisms and specialized cells. The cofactor is Mg(2+). Undergoes a tyrosination/detyrosination cycle, the cyclic removal and re-addition of a C-terminal tyrosine residue by the enzymes tubulin tyrosine carboxypeptidase (TTCP) and tubulin tyrosine ligase (TTL), respectively. Post-translationally, acetylation of alpha chains at Lys-40 stabilizes microtubules and affects affinity and processivity of microtubule motors. This modification has a role in multiple cellular functions, ranging from cell motility, cell cycle progression or cell differentiation to intracellular trafficking and signaling.

The protein localises to the cytoplasm. Its subcellular location is the cytoskeleton. It catalyses the reaction GTP + H2O = GDP + phosphate + H(+). Functionally, tubulin is the major constituent of microtubules, a cylinder consisting of laterally associated linear protofilaments composed of alpha- and beta-tubulin heterodimers. Microtubules grow by the addition of GTP-tubulin dimers to the microtubule end, where a stabilizing cap forms. Below the cap, tubulin dimers are in GDP-bound state, owing to GTPase activity of alpha-tubulin. This is Tubulin alpha chain from Trypanosoma cruzi.